We begin with the raw amino-acid sequence, 117 residues long: Large ribosomal subunit protein uL22 (117 aa).

This sequence belongs to the universal ribosomal protein uL22 family. As to quaternary structure, part of the 50S ribosomal subunit.

Functionally, this protein binds specifically to 23S rRNA; its binding is stimulated by other ribosomal proteins, e.g. L4, L17, and L20. It is important during the early stages of 50S assembly. It makes multiple contacts with different domains of the 23S rRNA in the assembled 50S subunit and ribosome. Its function is as follows. The globular domain of the protein is located near the polypeptide exit tunnel on the outside of the subunit, while an extended beta-hairpin is found that lines the wall of the exit tunnel in the center of the 70S ribosome. The chain is Large ribosomal subunit protein uL22 from Latilactobacillus sakei subsp. sakei (strain 23K) (Lactobacillus sakei subsp. sakei).